The following is a 128-amino-acid chain: Large ribosomal subunit protein bL17 (128 aa).

The protein belongs to the bacterial ribosomal protein bL17 family. In terms of assembly, part of the 50S ribosomal subunit. Contacts protein L32.

This is Large ribosomal subunit protein bL17 from Streptococcus sanguinis (strain SK36).